The primary structure comprises 201 residues: Small ribosomal subunit protein uS4 (201 aa).

Residues 1 to 42 (MARYTGPVTRKSRRLGTDLVGGDQSFEKRPYPPGQHGRARIK) are disordered. The S4 RNA-binding domain maps to 91–157 (SRLDNVVYRA…VPFQIARETA (67 aa)).

Belongs to the universal ribosomal protein uS4 family. Part of the 30S ribosomal subunit. Contacts protein S5. The interaction surface between S4 and S5 is involved in control of translational fidelity.

Its function is as follows. One of the primary rRNA binding proteins, it binds directly to 16S rRNA where it nucleates assembly of the body of the 30S subunit. Functionally, with S5 and S12 plays an important role in translational accuracy. This Mycobacterium marinum (strain ATCC BAA-535 / M) protein is Small ribosomal subunit protein uS4.